An 82-amino-acid chain; its full sequence is MTKILLLTITFYKYFISPLLGNNCIFSPTCSEYAQEAIITHGIIKGLWLTFRRIIKCQPFCIGGYDNVPTSIKNSKQPTKKI.

Belongs to the UPF0161 family.

The protein resides in the cell inner membrane. In terms of biological role, could be involved in insertion of integral membrane proteins into the membrane. The chain is Putative membrane protein insertion efficiency factor from Rickettsia typhi (strain ATCC VR-144 / Wilmington).